We begin with the raw amino-acid sequence, 86 residues long: Chymotrypsin inhibitor (86 aa).

An N-terminal signal peptide occupies residues methionine 1 to alanine 22.

Belongs to the protease inhibitor I13 (potato type I serine protease inhibitor) family. In terms of assembly, monomer. In terms of tissue distribution, expressed in the body wall, coelomocytes and at a lower level in intestine.

The protein resides in the secreted. In terms of biological role, inhibits L.terrestris digestive chymotrypsin LT_CH 1 and bovine alpha-chymotrypsin. The sequence is that of Chymotrypsin inhibitor from Lumbricus terrestris (Common earthworm).